The primary structure comprises 603 residues: UvrABC system protein C (603 aa).

The 78-residue stretch at 15–92 folds into the GIY-YIG domain; the sequence is DQPGCYLMKD…IKKHDPRFNI (78 aa). Positions 197–232 constitute a UVR domain; that stretch reads KTVKNDLMKKMQEAAENMEFEKAGEFRDQINAIETT.

The protein belongs to the UvrC family. In terms of assembly, interacts with UvrB in an incision complex.

It is found in the cytoplasm. The UvrABC repair system catalyzes the recognition and processing of DNA lesions. UvrC both incises the 5' and 3' sides of the lesion. The N-terminal half is responsible for the 3' incision and the C-terminal half is responsible for the 5' incision. The chain is UvrABC system protein C from Listeria monocytogenes serotype 4a (strain HCC23).